Consider the following 321-residue polypeptide: uncharacterized protein (321 aa).

This is an uncharacterized protein from Aquifex aeolicus (strain VF5).